Reading from the N-terminus, the 357-residue chain is UDP-N-acetylglucosamine--N-acetylmuramyl-(pentapeptide) pyrophosphoryl-undecaprenol N-acetylglucosamine transferase (357 aa).

Residues 12-14 (TGG), Asn124, Arg163, Ser189, Ile243, 262-267 (ALTVSE), and Gln288 contribute to the UDP-N-acetyl-alpha-D-glucosamine site.

It belongs to the glycosyltransferase 28 family. MurG subfamily.

It is found in the cell inner membrane. The enzyme catalyses di-trans,octa-cis-undecaprenyl diphospho-N-acetyl-alpha-D-muramoyl-L-alanyl-D-glutamyl-meso-2,6-diaminopimeloyl-D-alanyl-D-alanine + UDP-N-acetyl-alpha-D-glucosamine = di-trans,octa-cis-undecaprenyl diphospho-[N-acetyl-alpha-D-glucosaminyl-(1-&gt;4)]-N-acetyl-alpha-D-muramoyl-L-alanyl-D-glutamyl-meso-2,6-diaminopimeloyl-D-alanyl-D-alanine + UDP + H(+). It participates in cell wall biogenesis; peptidoglycan biosynthesis. Cell wall formation. Catalyzes the transfer of a GlcNAc subunit on undecaprenyl-pyrophosphoryl-MurNAc-pentapeptide (lipid intermediate I) to form undecaprenyl-pyrophosphoryl-MurNAc-(pentapeptide)GlcNAc (lipid intermediate II). The sequence is that of UDP-N-acetylglucosamine--N-acetylmuramyl-(pentapeptide) pyrophosphoryl-undecaprenol N-acetylglucosamine transferase from Pseudomonas aeruginosa (strain LESB58).